The chain runs to 361 residues: Chorismate synthase (361 aa).

NADP(+) contacts are provided by Arg-48 and Arg-54. FMN is bound by residues 131–133, 243–244, Gly-287, 302–306, and Arg-328; these read RSS, NA, and KPTSS.

It belongs to the chorismate synthase family. In terms of assembly, homotetramer. The cofactor is FMNH2.

It carries out the reaction 5-O-(1-carboxyvinyl)-3-phosphoshikimate = chorismate + phosphate. Its pathway is metabolic intermediate biosynthesis; chorismate biosynthesis; chorismate from D-erythrose 4-phosphate and phosphoenolpyruvate: step 7/7. Functionally, catalyzes the anti-1,4-elimination of the C-3 phosphate and the C-6 proR hydrogen from 5-enolpyruvylshikimate-3-phosphate (EPSP) to yield chorismate, which is the branch point compound that serves as the starting substrate for the three terminal pathways of aromatic amino acid biosynthesis. This reaction introduces a second double bond into the aromatic ring system. In Rhodopseudomonas palustris (strain HaA2), this protein is Chorismate synthase.